The following is a 588-amino-acid chain: A-type ATP synthase subunit A 3 (588 aa).

Residue 234–241 coordinates ATP; that stretch reads GPFGSGKT.

Belongs to the ATPase alpha/beta chains family. Has multiple subunits with at least A(3), B(3), C, D, E, F, H, I and proteolipid K(x).

Its subcellular location is the cell membrane. The catalysed reaction is ATP + H2O + 4 H(+)(in) = ADP + phosphate + 5 H(+)(out). Functionally, component of the A-type ATP synthase that produces ATP from ADP in the presence of a proton gradient across the membrane. The A chain is the catalytic subunit. The polypeptide is A-type ATP synthase subunit A 3 (Methanospirillum hungatei JF-1 (strain ATCC 27890 / DSM 864 / NBRC 100397 / JF-1)).